A 588-amino-acid chain; its full sequence is Neuropeptide-like 1 (588 aa).

Residues 1–179 (MQCIPKKTFM…DPEVLEYSPD (179 aa)) constitute a propeptide that is removed on maturation. The interval 115–143 (NGDLPITIQERESDNDDEEKRSASSSDNV) is disordered. T194 carries the threonine amide modification. Serine amide is present on residues S210, S227, and S244. Y260 is subject to Tyrosine amide. The residue at position 281 (E281) is a Glutamic acid 1-amide. The propeptide occupies 285 to 299 (SIASLARSGDWPSVA). Y318 carries the post-translational modification Tyrosine amide. The propeptide occupies 321-588 (SLSDDREAPS…SNSHIAPRSM (268 aa)). Positions 342-382 (GNSEGKENEWQATPFTVSEDLDEGKAKNRSNRRIEASQTRH) are disordered.

Its subcellular location is the secreted. In Camponotus floridanus (Florida carpenter ant), this protein is Neuropeptide-like 1.